The primary structure comprises 265 residues: Mlc titration factor A (265 aa).

Zn(2+)-binding residues include His111, His148, His152, and Glu211.

Belongs to the MtfA family. Interacts with Mlc. Zn(2+) is required as a cofactor.

It localises to the cytoplasm. Its function is as follows. Involved in the modulation of the activity of the glucose-phosphotransferase system (glucose-PTS). Interacts with the transcriptional repressor Mlc, preventing its interaction with DNA and leading to the modulation of expression of genes regulated by Mlc, including ptsG, which encodes the PTS system glucose-specific EIICB component. Functionally, shows zinc-dependent metallopeptidase activity. The protein is Mlc titration factor A of Escherichia coli (strain UTI89 / UPEC).